Here is a 446-residue protein sequence, read N- to C-terminus: tRNA-2-methylthio-N(6)-dimethylallyladenosine synthase (446 aa).

The MTTase N-terminal domain maps to 3–120 (KKLFIETHGC…LPEMIDAARS (118 aa)). Residues Cys12, Cys49, Cys83, Cys157, Cys161, and Cys164 each contribute to the [4Fe-4S] cluster site. The region spanning 143 to 375 (RVDGPTAFVS…QSRIHQQGYE (233 aa)) is the Radical SAM core domain. Residues 378–442 (RRMVGSTQRI…PHSLRGTLID (65 aa)) enclose the TRAM domain.

It belongs to the methylthiotransferase family. MiaB subfamily. Monomer. [4Fe-4S] cluster serves as cofactor.

Its subcellular location is the cytoplasm. The catalysed reaction is N(6)-dimethylallyladenosine(37) in tRNA + (sulfur carrier)-SH + AH2 + 2 S-adenosyl-L-methionine = 2-methylsulfanyl-N(6)-dimethylallyladenosine(37) in tRNA + (sulfur carrier)-H + 5'-deoxyadenosine + L-methionine + A + S-adenosyl-L-homocysteine + 2 H(+). Its function is as follows. Catalyzes the methylthiolation of N6-(dimethylallyl)adenosine (i(6)A), leading to the formation of 2-methylthio-N6-(dimethylallyl)adenosine (ms(2)i(6)A) at position 37 in tRNAs that read codons beginning with uridine. The protein is tRNA-2-methylthio-N(6)-dimethylallyladenosine synthase of Pseudomonas aeruginosa (strain UCBPP-PA14).